Here is a 246-residue protein sequence, read N- to C-terminus: 3-deoxy-manno-octulosonate cytidylyltransferase (246 aa).

This sequence belongs to the KdsB family.

The protein localises to the cytoplasm. The enzyme catalyses 3-deoxy-alpha-D-manno-oct-2-ulosonate + CTP = CMP-3-deoxy-beta-D-manno-octulosonate + diphosphate. It participates in nucleotide-sugar biosynthesis; CMP-3-deoxy-D-manno-octulosonate biosynthesis; CMP-3-deoxy-D-manno-octulosonate from 3-deoxy-D-manno-octulosonate and CTP: step 1/1. It functions in the pathway bacterial outer membrane biogenesis; lipopolysaccharide biosynthesis. Its function is as follows. Activates KDO (a required 8-carbon sugar) for incorporation into bacterial lipopolysaccharide in Gram-negative bacteria. This chain is 3-deoxy-manno-octulosonate cytidylyltransferase, found in Myxococcus xanthus (strain DK1622).